The sequence spans 300 residues: F-box associated domain-containing protein sdz-33 (300 aa).

In terms of domain architecture, F-box spans 5 to 51 (PFPILCLPDFVLQKSLKLMGVVEHLCLSILSKNIKQLIATLKGYPKC).

Expressed in D-type motor neuron cell bodies.

In terms of biological role, substrate recognition component of E3 ubiquitin-protein ligase complex which mediates the ubiquitination and subsequent proteasomal degradation of target proteins such as mdl-1. Positively regulates axon regeneration by targeting mdl-1 for ubiquitin-mediated degradation; probably thereby reducing levels of mdl-1-mxl-1 heterodimers, allowing free mxl-1 to form complexes with tdpt-1 and thus inhibiting tdpt-1-dependent sumoylation of ets-4. In Caenorhabditis elegans, this protein is F-box associated domain-containing protein sdz-33.